A 469-amino-acid chain; its full sequence is 3-isopropylmalate dehydratase large subunit (469 aa).

Residues C349, C410, and C413 each coordinate [4Fe-4S] cluster.

Belongs to the aconitase/IPM isomerase family. LeuC type 1 subfamily. Heterodimer of LeuC and LeuD. The cofactor is [4Fe-4S] cluster.

The catalysed reaction is (2R,3S)-3-isopropylmalate = (2S)-2-isopropylmalate. The protein operates within amino-acid biosynthesis; L-leucine biosynthesis; L-leucine from 3-methyl-2-oxobutanoate: step 2/4. In terms of biological role, catalyzes the isomerization between 2-isopropylmalate and 3-isopropylmalate, via the formation of 2-isopropylmaleate. The protein is 3-isopropylmalate dehydratase large subunit of Neisseria meningitidis serogroup B (strain ATCC BAA-335 / MC58).